Here is a 536-residue protein sequence, read N- to C-terminus: Probable galacturonosyltransferase 10 (536 aa).

At 1-16 the chain is on the cytoplasmic side; it reads MRRRGGDSFRRAGRRK. Residues 17-37 form a helical; Signal-anchor for type II membrane protein membrane-spanning segment; it reads ISNVVWWVLSGIALLLFFLIL. The Lumenal portion of the chain corresponds to 38–536; sequence SKAGHIEPRP…SPFMQQCNFH (499 aa). Residues N64, N246, N300, N403, and N436 are each glycosylated (N-linked (GlcNAc...) asparagine).

Belongs to the glycosyltransferase 8 family. Expressed in roots, inflorescences, siliques, leaves and stems.

It localises to the golgi apparatus membrane. The protein operates within glycan metabolism; pectin biosynthesis. In terms of biological role, may be involved in pectin and/or xylans biosynthesis in cell walls. This is Probable galacturonosyltransferase 10 (GAUT10) from Arabidopsis thaliana (Mouse-ear cress).